Here is a 494-residue protein sequence, read N- to C-terminus: DEAD-box ATP-dependent RNA helicase 20 (494 aa).

Residues 1 to 20 (MSRFDGRAADPGSYRDRRSE) are compositionally biased toward basic and acidic residues. Positions 1 to 39 (MSRFDGRAADPGSYRDRRSEGAFGGGTRAFAPTSKADSA) are disordered. The segment covering 29 to 39 (AFAPTSKADSA) has biased composition (low complexity). Positions 91–119 (REFRDVGFPEYVLQEITKAGFVEPTPIQS) match the Q motif motif. The region spanning 122–297 (WPMALRGRDL…RNFLFDPYKV (176 aa)) is the Helicase ATP-binding domain. 135–142 (AETGSGKT) contacts ATP. Residues 245 to 248 (DEAD) carry the DEAD box motif. The 146-residue stretch at 325–470 (KLVNLLEDIM…KVSPELANMG (146 aa)) folds into the Helicase C-terminal domain. A disordered region spans residues 465–494 (ELANMGRGAPPPSSGHRDRYRGYGGGRSWS).

The protein belongs to the DEAD box helicase family. DDX5/DBP2 subfamily.

Its subcellular location is the nucleus. It catalyses the reaction ATP + H2O = ADP + phosphate + H(+). In terms of biological role, ATP-dependent RNA helicase involved nonsense-mediated mRNA decay and ribosome biogenesis through rRNA processing. The sequence is that of DEAD-box ATP-dependent RNA helicase 20 from Oryza sativa subsp. japonica (Rice).